Consider the following 610-residue polypeptide: E-selectin (610 aa).

Positions 1-21 (MIASQFLSALTLVLLIKESGA) are cleaved as a signal peptide. The C-type lectin domain maps to 22 to 138 (WSYSASTTNM…CNKKKLALCY (117 aa)). The Extracellular portion of the chain corresponds to 22–555 (WSYSASTTNM…CEATAKSNIP (534 aa)). An N-linked (GlcNAc...) asparagine glycan is attached at N30. Intrachain disulfides connect C40-C137, C110-C129, C142-C153, C147-C162, C164-C173, C179-C223, C192-C205, C209-C236, C241-C285, C254-C267, C271-C298, C303-C348, C334-C361, C366-C411, C397-C424, C429-C474, C460-C487, C492-C533, and C519-C546. The Ca(2+) site is built by E101, N103, and E108. A carbohydrate contacts are provided by residues 101–108 (EPNNKQNE), 112–117 (EIYIKR), and 125–127 (NDE). The Ca(2+) site is built by N125 and D126. One can recognise an EGF-like domain in the interval 139–174 (TAACTHTSCSGHGECVETINNYTCQCHPGFTGLRCE). N159 carries an N-linked (GlcNAc...) asparagine glycan. Sushi domains follow at residues 177-238 (VTCQ…ACHV), 239-300 (VECD…TCKA), 314-363 (VNCS…VCKA), 365-426 (QCKA…TCEA), 428-489 (RCDA…SCQV), and 490-548 (VQCA…TCEA). N198 and N202 each carry an N-linked (GlcNAc...) asparagine glycan. An N-linked (GlcNAc...) asparagine glycan is attached at N264. 3 N-linked (GlcNAc...) asparagine glycosylation sites follow: N315, N327, and N331. Residue N526 is glycosylated (N-linked (GlcNAc...) asparagine). The chain crosses the membrane as a helical span at residues 556–577 (LTVGLSAAGTSLLTLASFLFWL). The Cytoplasmic portion of the chain corresponds to 578–610 (LKRLRRKAKKFVPASSYQSLQSDGSYQMPSESA).

This sequence belongs to the selectin/LECAM family. In terms of assembly, interacts with SELPLG/PSGL1 and PODXL2 through the sialyl Lewis X epitope. SELPLG sulfation appears not to be required for this interaction.

The protein resides in the cell membrane. Functionally, cell-surface glycoprotein having a role in immunoadhesion. Mediates in the adhesion of blood neutrophils in cytokine-activated endothelium through interaction with SELPLG/PSGL1. May have a role in capillary morphogenesis. This chain is E-selectin (SELE), found in Equus caballus (Horse).